A 398-amino-acid chain; its full sequence is KiSS-1 receptor (398 aa).

Residues 1–46 (MHTVATSGPNASWGAPANASGCPGCGANASDGPVPSPRAVDAWLVP) lie on the Extracellular side of the membrane. Residues Asn-10, Asn-18, and Asn-28 are each glycosylated (N-linked (GlcNAc...) asparagine). Residues 47–67 (LFFAALMLLGLVGNSLVIYVI) traverse the membrane as a helical segment. Over 68 to 78 (CRHKPMRTVTN) the chain is Cytoplasmic. The chain crosses the membrane as a helical span at residues 79 to 101 (FYIANLAATDVTFLLCCVPFTAL). At 102–120 (LYPLPGWVLGDFMCKFVNY) the chain is on the extracellular side. A disulfide bond links Cys-115 and Cys-191. The chain crosses the membrane as a helical span at residues 121 to 138 (IQQVSVQATCATLTAMSV). Over 139–157 (DRWYVTVFPLRALHRRTPR) the chain is Cytoplasmic. Residues 158–178 (LALAVSLSIWVGSAAVSAPVL) traverse the membrane as a helical segment. Topologically, residues 179–202 (ALHRLSPGPRAYCSEAFPSRALER) are extracellular. A helical transmembrane segment spans residues 203–223 (AFALYNLLALYLLPLLATCAC). The Cytoplasmic portion of the chain corresponds to 224-263 (YAAMLRHLGRVAVRPAPADSALQGQVLAERAGAVRAKVSR). The chain crosses the membrane as a helical span at residues 264–284 (LVAAVVLLFAACWGPIQLFLV). Residues 285-305 (LQALGPAGSWHPRSYAAYALK) lie on the Extracellular side of the membrane. A helical membrane pass occupies residues 306–328 (TWAHCMSYSNSALNPLLYAFLGS). Residues 329 to 398 (HFRQAFRRVC…CVLGEDNAPL (70 aa)) are Cytoplasmic-facing. A disordered region spans residues 341-363 (APRRPRRPRRPGPSDPAAPHAEL).

The protein belongs to the G-protein coupled receptor 1 family. Most highly expressed in the pancreas, placenta and spinal cord, with lower-level of expression in peripheral blood leukocytes, kidney, lung, fetal liver, stomach, small intestine, testes, spleen, thymus, adrenal glands and lymph nodes. In the adult brain, expressed in the superior frontal gyrus, putamen, caudate nucleus, cingulate gyrus, nucleus accumbens, hippocampus, pons and amygdala, as well as the hypothalamus and pituitary. Expression levels are higher in early (7-9 weeks) than term placentas. Expression levels were increased in both early placentas and molar pregnancies and were reduced in choriocarcinoma cells. Expressed at higher levels in first trimester trophoblasts than at term of gestation. Also found in the extravillous trophoblast suggesting endocrine/paracrine activation mechanism.

The protein localises to the cell membrane. Its function is as follows. Receptor for metastin (kisspeptin-54 or kp-54), a C-terminally amidated peptide of KiSS1. KiSS1 is a metastasis suppressor protein that suppresses metastases in malignant melanomas and in some breast carcinomas without affecting tumorigenicity. The metastasis suppressor properties may be mediated in part by cell cycle arrest and induction of apoptosis in malignant cells. The receptor is essential for normal gonadotropin-released hormone physiology and for puberty. The hypothalamic KiSS1/KISS1R system is a pivotal factor in central regulation of the gonadotropic axis at puberty and in adulthood. The receptor is also probably involved in the regulation and fine-tuning of trophoblast invasion generated by the trophoblast itself. Analysis of the transduction pathways activated by the receptor identifies coupling to phospholipase C and intracellular calcium release through pertussis toxin-insensitive G(q) proteins. The protein is KiSS-1 receptor (KISS1R) of Homo sapiens (Human).